Here is a 266-residue protein sequence, read N- to C-terminus: Glutamate racemase (266 aa).

Residues 9–10 and 41–42 each bind substrate; these read DS and YG. Catalysis depends on Cys72, which acts as the Proton donor/acceptor. Residue 73-74 coordinates substrate; that stretch reads NT. Cys184 serves as the catalytic Proton donor/acceptor. 185-186 provides a ligand contact to substrate; the sequence is TH.

It belongs to the aspartate/glutamate racemases family.

It catalyses the reaction L-glutamate = D-glutamate. It participates in cell wall biogenesis; peptidoglycan biosynthesis. Its function is as follows. Provides the (R)-glutamate required for cell wall biosynthesis. The chain is Glutamate racemase from Staphylococcus haemolyticus.